The sequence spans 338 residues: Aspartate carbamoyltransferase catalytic subunit (338 aa).

Carbamoyl phosphate-binding residues include Arg59 and Thr60. Lys87 is a binding site for L-aspartate. Carbamoyl phosphate contacts are provided by Arg109, His142, and Gln145. Arg182 and Arg253 together coordinate L-aspartate. 2 residues coordinate carbamoyl phosphate: Gly294 and Pro295.

This sequence belongs to the aspartate/ornithine carbamoyltransferase superfamily. ATCase family. As to quaternary structure, heterododecamer (2C3:3R2) of six catalytic PyrB chains organized as two trimers (C3), and six regulatory PyrI chains organized as three dimers (R2).

The catalysed reaction is carbamoyl phosphate + L-aspartate = N-carbamoyl-L-aspartate + phosphate + H(+). Its pathway is pyrimidine metabolism; UMP biosynthesis via de novo pathway; (S)-dihydroorotate from bicarbonate: step 2/3. Functionally, catalyzes the condensation of carbamoyl phosphate and aspartate to form carbamoyl aspartate and inorganic phosphate, the committed step in the de novo pyrimidine nucleotide biosynthesis pathway. This Prochlorococcus marinus (strain AS9601) protein is Aspartate carbamoyltransferase catalytic subunit.